The following is a 424-amino-acid chain: Oleosin-B3 (424 aa).

The tract at residues 1-37 (MRNEIQNETAQTDQTQGSMFSFFNLFPFLLPMFEVIK) is polar. Helical transmembrane passes span 16–36 (QGSMFSFFNLFPFLLPMFEVI), 38–58 (MVVASVASVVYLGFAGVTLSG), and 69–89 (LFIIFSPILLPAIAATTVLAA). The interval 38–119 (MVVASVASVV…GIPESIKPSN (82 aa)) is hydrophobic. Repeat copies occupy residues 111 to 120 (IPESIKPSNV), 121 to 130 (IPESIKPSNI), 131 to 140 (IPESIKPSNI), 141 to 150 (IPVSIKPSNI), 196 to 202 (EDKHGKG), 203 to 209 (ESKHGKG), 210 to 216 (ESKHGKG), 217 to 223 (ESTHGKG), 241 to 258 (KHGSGGSPMGGGKHGSGG), 259 to 276 (KHESGGSPMGGGKHGSGG), 277 to 294 (KHESGGASMGGGKHESVG), 301 to 318 (KHESGGSPMGGGKHGSGG), 319 to 336 (KHESGGASMGGGKHGSGG), 337 to 354 (RHEGGGSAMGGGKHGSGG), 396 to 400 (SSDGS), 401 to 405 (SSDGS), 406 to 410 (SSDGS), and 411 to 415 (SSDGS). The 4 X 10 AA tandem repeats of I-P-[EV]-S-I-K-P-S-N-[IV] stretch occupies residues 111–150 (IPESIKPSNVIPESIKPSNIIPESIKPSNIIPVSIKPSNI). Residues 164 to 424 (KIKAKQEEKS…SSHGSGGKHI (261 aa)) form a disordered region. Basic and acidic residues predominate over residues 167–220 (AKQEEKSKGKSEDSSKGKGKSKGEDTTTDEDKHGKGESKHGKGESKHGKGESTH). Residues 196-223 (EDKHGKGESKHGKGESKHGKGESTHGKG) are 4 X 7 AA tandem repeats of E-[SD]-[KT]-H-G-K-G. The tract at residues 241–354 (KHGSGGSPMG…MGGGKHGSGG (114 aa)) is 6 X 18 AA tandem repeats of [KR]-H-[EG]-[SG]-G-G-[SA]-[PSA]-M-G-G-G-K-H-[GE]-S-[GV]-G. Residues 242–255 (HGSGGSPMGGGKHG) show a composition bias toward gly residues. A compositionally biased stretch (basic and acidic residues) spans 288 to 304 (GKHESVGKHGSGGKHES). A compositionally biased stretch (gly residues) spans 341-355 (GGSAMGGGKHGSGGK). Over residues 391–416 (SSTSESSDGSSSDGSSSDGSSSDGSS) the composition is skewed to low complexity. The interval 396–415 (SSDGSSSDGSSSDGSSSDGS) is 4 X 5 AA tandem repeats of S-S-D-G-S.

This sequence belongs to the oleosin family. The full-length protein is found in the tapetal lipid bodies of immature anthers, the proteolytically cleaved C-terminal product is found on the coats of pollen grains. No expression is detected in other flower organs, siliques or seedlings.

The protein localises to the lipid droplet. Its subcellular location is the membrane. Its function is as follows. Many of the major pollen coat proteins are derived from endoproteolytic cleavage of oleosin-like proteins. In Brassica napus (Rape), this protein is Oleosin-B3.